The sequence spans 149 residues: Small ribosomal subunit protein bS6 (149 aa).

Residues 93–149 (VGKHEEGPSAMMQKRDRDDRPRRDGDRPDRGGFGDRGPRPDRGDRDDRPRRPREDRA) are disordered. Over residues 94–149 (GKHEEGPSAMMQKRDRDDRPRRDGDRPDRGGFGDRGPRPDRGDRDDRPRRPREDRA) the composition is skewed to basic and acidic residues.

This sequence belongs to the bacterial ribosomal protein bS6 family.

Binds together with bS18 to 16S ribosomal RNA. The chain is Small ribosomal subunit protein bS6 from Rhizobium meliloti (strain 1021) (Ensifer meliloti).